The sequence spans 901 residues: Protein translocase subunit SecA (901 aa).

Residues Gln-87, 105-109, and Asp-512 contribute to the ATP site; that span reads GEGKT. Residues 859-901 are disordered; sequence HQDDDSAAAAALAAQTGERKVGRNDPCPCGSGKKYKQCHGRLQ. Cys-885, Cys-887, Cys-896, and His-897 together coordinate Zn(2+). Basic residues predominate over residues 891-901; that stretch reads KKYKQCHGRLQ.

This sequence belongs to the SecA family. In terms of assembly, monomer and homodimer. Part of the essential Sec protein translocation apparatus which comprises SecA, SecYEG and auxiliary proteins SecDF-YajC and YidC. Zn(2+) serves as cofactor.

It is found in the cell inner membrane. The protein localises to the cytoplasm. It catalyses the reaction ATP + H2O + cellular proteinSide 1 = ADP + phosphate + cellular proteinSide 2.. In terms of biological role, part of the Sec protein translocase complex. Interacts with the SecYEG preprotein conducting channel. Has a central role in coupling the hydrolysis of ATP to the transfer of proteins into and across the cell membrane, serving both as a receptor for the preprotein-SecB complex and as an ATP-driven molecular motor driving the stepwise translocation of polypeptide chains across the membrane. This is Protein translocase subunit SecA from Escherichia coli O127:H6 (strain E2348/69 / EPEC).